Reading from the N-terminus, the 318-residue chain is NADH-ubiquinone oxidoreductase chain 1 (318 aa).

8 helical membrane passes run 2-22, 70-90, 100-120, 146-166, 171-191, 222-242, 253-273, and 294-314; these read FTIN…FLTL, MFII…VPLP, LGVL…LWSG, LAII…STLI, HLWL…STLA, LFFM…TILF, ELYT…FLWI, and LPLT…MSSI.

Belongs to the complex I subunit 1 family.

The protein localises to the mitochondrion inner membrane. The enzyme catalyses a ubiquinone + NADH + 5 H(+)(in) = a ubiquinol + NAD(+) + 4 H(+)(out). Functionally, core subunit of the mitochondrial membrane respiratory chain NADH dehydrogenase (Complex I) that is believed to belong to the minimal assembly required for catalysis. Complex I functions in the transfer of electrons from NADH to the respiratory chain. The immediate electron acceptor for the enzyme is believed to be ubiquinone. The chain is NADH-ubiquinone oxidoreductase chain 1 (MT-ND1) from Rhinoceros unicornis (Greater Indian rhinoceros).